A 277-amino-acid chain; its full sequence is Formamidopyrimidine-DNA glycosylase (277 aa).

Pro2 acts as the Schiff-base intermediate with DNA in catalysis. The active-site Proton donor is the Glu3. Lys60 acts as the Proton donor; for beta-elimination activity in catalysis. DNA is bound by residues His94, Arg113, and Arg156. The segment at 241 to 275 (KVYNREGLPCPHCGKPIQRIKVAGRSSYYCSSCQK) adopts an FPG-type zinc-finger fold. Catalysis depends on Arg265, which acts as the Proton donor; for delta-elimination activity.

This sequence belongs to the FPG family. As to quaternary structure, monomer. Zn(2+) is required as a cofactor.

It carries out the reaction Hydrolysis of DNA containing ring-opened 7-methylguanine residues, releasing 2,6-diamino-4-hydroxy-5-(N-methyl)formamidopyrimidine.. The enzyme catalyses 2'-deoxyribonucleotide-(2'-deoxyribose 5'-phosphate)-2'-deoxyribonucleotide-DNA = a 3'-end 2'-deoxyribonucleotide-(2,3-dehydro-2,3-deoxyribose 5'-phosphate)-DNA + a 5'-end 5'-phospho-2'-deoxyribonucleoside-DNA + H(+). Functionally, involved in base excision repair of DNA damaged by oxidation or by mutagenic agents. Acts as a DNA glycosylase that recognizes and removes damaged bases. Has a preference for oxidized purines, such as 7,8-dihydro-8-oxoguanine (8-oxoG). Has AP (apurinic/apyrimidinic) lyase activity and introduces nicks in the DNA strand. Cleaves the DNA backbone by beta-delta elimination to generate a single-strand break at the site of the removed base with both 3'- and 5'-phosphates. The chain is Formamidopyrimidine-DNA glycosylase from Desulforamulus reducens (strain ATCC BAA-1160 / DSM 100696 / MI-1) (Desulfotomaculum reducens).